The chain runs to 250 residues: Ubiquinone/menaquinone biosynthesis C-methyltransferase UbiE (250 aa).

Residues T74, D94, 122-123, and S139 contribute to the S-adenosyl-L-methionine site; that span reads DA.

Belongs to the class I-like SAM-binding methyltransferase superfamily. MenG/UbiE family.

It carries out the reaction a 2-demethylmenaquinol + S-adenosyl-L-methionine = a menaquinol + S-adenosyl-L-homocysteine + H(+). The enzyme catalyses a 2-methoxy-6-(all-trans-polyprenyl)benzene-1,4-diol + S-adenosyl-L-methionine = a 5-methoxy-2-methyl-3-(all-trans-polyprenyl)benzene-1,4-diol + S-adenosyl-L-homocysteine + H(+). The protein operates within quinol/quinone metabolism; menaquinone biosynthesis; menaquinol from 1,4-dihydroxy-2-naphthoate: step 2/2. It participates in cofactor biosynthesis; ubiquinone biosynthesis. Methyltransferase required for the conversion of demethylmenaquinol (DMKH2) to menaquinol (MKH2) and the conversion of 2-polyprenyl-6-methoxy-1,4-benzoquinol (DDMQH2) to 2-polyprenyl-3-methyl-6-methoxy-1,4-benzoquinol (DMQH2). The protein is Ubiquinone/menaquinone biosynthesis C-methyltransferase UbiE of Ruegeria sp. (strain TM1040) (Silicibacter sp.).